The chain runs to 336 residues: Probable allantoicase (336 aa).

It belongs to the allantoicase family.

The enzyme catalyses allantoate + H2O = (S)-ureidoglycolate + urea. The protein operates within nitrogen metabolism; (S)-allantoin degradation; (S)-ureidoglycolate from allantoate (aminidohydrolase route): step 1/1. In Acinetobacter baumannii (strain ATCC 17978 / DSM 105126 / CIP 53.77 / LMG 1025 / NCDC KC755 / 5377), this protein is Probable allantoicase.